The chain runs to 513 residues: GMP synthase [glutamine-hydrolyzing] (513 aa).

Residues Leu9–Gln198 enclose the Glutamine amidotransferase type-1 domain. Cys86 acts as the Nucleophile in catalysis. Residues His172 and Glu174 contribute to the active site. The GMPS ATP-PPase domain occupies Trp199–Arg388. Ser226–Ser232 contributes to the ATP binding site.

As to quaternary structure, homodimer.

It catalyses the reaction XMP + L-glutamine + ATP + H2O = GMP + L-glutamate + AMP + diphosphate + 2 H(+). Its pathway is purine metabolism; GMP biosynthesis; GMP from XMP (L-Gln route): step 1/1. In terms of biological role, catalyzes the synthesis of GMP from XMP. The sequence is that of GMP synthase [glutamine-hydrolyzing] from Staphylococcus aureus (strain Mu3 / ATCC 700698).